The following is a 315-amino-acid chain: GTP cyclohydrolase MptA (315 aa).

The protein belongs to the GTP cyclohydrolase IV family. In terms of assembly, homodimer. Fe(2+) is required as a cofactor.

It catalyses the reaction GTP + H2O = 7,8-dihydroneopterin 2',3'-cyclic phosphate + formate + diphosphate + H(+). It participates in cofactor biosynthesis; 5,6,7,8-tetrahydromethanopterin biosynthesis. In terms of biological role, converts GTP to 7,8-dihydro-D-neopterin 2',3'-cyclic phosphate, the first intermediate in the biosynthesis of coenzyme methanopterin. This is GTP cyclohydrolase MptA from Methanococcus maripaludis (strain C7 / ATCC BAA-1331).